Reading from the N-terminus, the 512-residue chain is MRFSTEGFTSKVVAAILAFSRLVSAQPIIFDMRDVSSSADKWKDQSIYQIVTDRFARSDGSTTADCLVSDRKYCGGSYKGIIDKLDYIQGMGFTAIWISPVVEQIPDNTAYGYAYHGYWMKNIDELNTNFGTADELKQLASELHSRSMLLMVDVVYNHYAWNGDGSSVDYSSFTPFNQQSYFHDYCLITNYNDQTNVEDCWEGDTEVSLPDLSTEDNEVIGVFQTWVSDFVQNYSIDGLRIDSAKHVDTASLTKFEDASGVYNLGEVYQGDPTYTCPYQNYMKGVTNYPLYYPVYRFFSDTSATSSELTSMISTLQSSCSDVSLLGNFIENHDQVRFPSVTSDTSLIKNDMAFIILGDGIPIIYYGQEQGLNGGSDPANREALWLSGYNTDSEYYELISKLNQIRNQAIKKDSAYSTYKSSVVSSSDHYIATRKGSDANQLISIFNNLGSNGSQDITVSNTGYSSGDKVIDIISCNSVLAGDSGSLSVSISGGMPQVYAPSSVLSGSGICNQ.

A signal peptide spans 1–25 (MRFSTEGFTSKVVAAILAFSRLVSA). Cys66 and Cys74 form a disulfide bridge. Residue Trp119 coordinates substrate. Ca(2+) is bound at residue Asn157. His158 contacts substrate. The cysteines at positions 186 and 200 are disulfide-linked. Positions 198 and 211 each coordinate Ca(2+). Asn233 carries N-linked (GlcNAc...) asparagine glycosylation. Arg240 is a binding site for substrate. 3 residues coordinate Ca(2+): Asp242, His246, and Glu266. Asp242 (nucleophile) is an active-site residue. 245 to 246 (KH) serves as a coordination point for substrate. Catalysis depends on Glu266, which acts as the Proton donor. Gly270 lines the substrate pocket. Cys276 and Cys319 are disulfide-bonded. Substrate contacts are provided by Asp333 and Arg380. The cysteines at positions 475 and 510 are disulfide-linked.

The protein belongs to the glycosyl hydrolase 13 family. Ca(2+) serves as cofactor.

The protein localises to the secreted. The catalysed reaction is Endohydrolysis of (1-&gt;4)-alpha-D-glucosidic linkages in polysaccharides containing three or more (1-&gt;4)-alpha-linked D-glucose units.. Alpha-amylase expression underlies catabolite repression by glucose. In Schwanniomyces occidentalis (Yeast), this protein is Alpha-amylase 1 (AMY1).